Consider the following 193-residue polypeptide: Interferon lambda-3 (193 aa).

A signal peptide spans 1 to 19 (MLLLLLPLLLAAVLTRTQA). Cystine bridges form between cysteine 35/cysteine 132, cysteine 69/cysteine 166, and cysteine 185/cysteine 192.

Belongs to the lambda interferon family.

It is found in the secreted. In terms of biological role, cytokine with antiviral, antitumour and immunomodulatory activities. Plays a critical role in the antiviral host defense, predominantly in the epithelial tissues. Acts as a ligand for the heterodimeric class II cytokine receptor composed of IL10RB and IFNLR1, and receptor engagement leads to the activation of the JAK/STAT signaling pathway resulting in the expression of IFN-stimulated genes (ISG), which mediate the antiviral state. Has a restricted receptor distribution and therefore restricted targets: is primarily active in epithelial cells and this cell type-selective action is because of the epithelial cell-specific expression of its receptor IFNLR1. Seems not to be essential for early virus-activated host defense in vaginal infection, but plays an important role in Toll-like receptor (TLR)-induced antiviral defense. Plays a significant role in the antiviral immune defense in the intestinal epithelium. Exerts an immunomodulatory effect by up-regulating MHC class I antigen expression. The protein is Interferon lambda-3 (Ifnl3) of Mus musculus (Mouse).